We begin with the raw amino-acid sequence, 169 residues long: Large ribosomal subunit protein uL10 (169 aa).

It belongs to the universal ribosomal protein uL10 family. As to quaternary structure, part of the ribosomal stalk of the 50S ribosomal subunit. The N-terminus interacts with L11 and the large rRNA to form the base of the stalk. The C-terminus forms an elongated spine to which L12 dimers bind in a sequential fashion forming a multimeric L10(L12)X complex.

Forms part of the ribosomal stalk, playing a central role in the interaction of the ribosome with GTP-bound translation factors. This chain is Large ribosomal subunit protein uL10, found in Orientia tsutsugamushi (strain Ikeda) (Rickettsia tsutsugamushi).